Reading from the N-terminus, the 483-residue chain is Glutathione reductase (483 aa).

An N-acetylmethionine modification is found at methionine 1. Leucine 2 carries the post-translational modification N-acetylserine. FAD contacts are provided by serine 33 and glycine 34. Serine 33 lines the glutathione pocket. Position 40 (arginine 40) interacts with glutathione. 4 residues coordinate FAD: glutamate 53, threonine 60, cysteine 61, and lysine 69. Cysteine 61 and cysteine 66 are disulfide-bonded. Tyrosine 123 contacts glutathione. Residue alanine 139 participates in FAD binding. Positions 205, 208, 211, 228, and 234 each coordinate NADP(+). Glutathione is bound at residue threonine 243. Asparagine 278 is a glycosylation site (N-linked (GlcNAc...) asparagine). Residue glycine 294 participates in NADP(+) binding. Aspartate 334 is a binding site for FAD. Residue glutamate 340 coordinates NADP(+). Threonine 342 is an FAD binding site. Arginine 350 is a binding site for glutathione. Position 375 (valine 375) interacts with NADP(+). Lysine 425 is a binding site for glutathione. Position 472 (histidine 472) interacts with FAD. The Proton acceptor role is filled by histidine 472.

This sequence belongs to the class-I pyridine nucleotide-disulfide oxidoreductase family. As to quaternary structure, homodimer. It depends on FAD as a cofactor.

It is found in the cytoplasm. The protein localises to the nucleus. Its subcellular location is the mitochondrion. The protein resides in the peroxisome. It carries out the reaction 2 glutathione + NADP(+) = glutathione disulfide + NADPH + H(+). Catalyzes the reduction of glutathione disulfide (GSSG) to reduced glutathione (GSH). Constitutes the major mechanism to maintain a high GSH:GSSG ratio in the cytosol. This chain is Glutathione reductase, found in Saccharomyces cerevisiae (strain ATCC 204508 / S288c) (Baker's yeast).